We begin with the raw amino-acid sequence, 1120 residues long: Transcription-repair-coupling factor (1120 aa).

A Helicase ATP-binding domain is found at 591-756; the sequence is DLTNGMLMDR…LTGLKELSII (166 aa). ATP is bound at residue 604 to 611; that stretch reads GDVGFGKT. A DEEQ box motif is present at residues 709 to 712; it reads DEEQ. The 157-residue stretch at 777-933 folds into the Helicase C-terminal domain; it reads IIRDALLREH…TIASHDADLR (157 aa).

In the N-terminal section; belongs to the UvrB family. It in the C-terminal section; belongs to the helicase family. RecG subfamily.

The protein resides in the cytoplasm. Its function is as follows. Couples transcription and DNA repair by recognizing RNA polymerase (RNAP) stalled at DNA lesions. Mediates ATP-dependent release of RNAP and its truncated transcript from the DNA, and recruitment of nucleotide excision repair machinery to the damaged site. The polypeptide is Transcription-repair-coupling factor (Rickettsia typhi (strain ATCC VR-144 / Wilmington)).